Reading from the N-terminus, the 621-residue chain is Auxin response factor 13 (621 aa).

The TF-B3 DNA-binding region spans 124 to 228 (FSKILTASDV…ELRFGIRRAK (105 aa)). In terms of domain architecture, PB1 spans 508–600 (RSRIKVHMQG…EIKKMKLKNK (93 aa)).

This sequence belongs to the ARF family. Homodimers and heterodimers.

Its subcellular location is the nucleus. Its function is as follows. Auxin response factors (ARFs) are transcriptional factors that bind specifically to the DNA sequence 5'-TGTCTC-3' found in the auxin-responsive promoter elements (AuxREs). Could act as transcriptional activator or repressor. Formation of heterodimers with Aux/IAA proteins may alter their ability to modulate early auxin response genes expression. The polypeptide is Auxin response factor 13 (ARF13) (Arabidopsis thaliana (Mouse-ear cress)).